Here is a 247-residue protein sequence, read N- to C-terminus: Carboxy-S-adenosyl-L-methionine synthase (247 aa).

Residues Tyr-39, 64-66, 89-90, 117-118, Asn-132, and Arg-199 contribute to the S-adenosyl-L-methionine site; these read GCS, DN, and DI.

Belongs to the class I-like SAM-binding methyltransferase superfamily. Cx-SAM synthase family. In terms of assembly, homodimer.

The enzyme catalyses prephenate + S-adenosyl-L-methionine = carboxy-S-adenosyl-L-methionine + 3-phenylpyruvate + H2O. Its function is as follows. Catalyzes the conversion of S-adenosyl-L-methionine (SAM) to carboxy-S-adenosyl-L-methionine (Cx-SAM). This chain is Carboxy-S-adenosyl-L-methionine synthase, found in Salmonella paratyphi B (strain ATCC BAA-1250 / SPB7).